Reading from the N-terminus, the 232-residue chain is Fibrillarin-like rRNA/tRNA 2'-O-methyltransferase (232 aa).

S-adenosyl-L-methionine is bound by residues 89–90 (TT), 108–109 (EF), 133–134 (DA), and 153–156 (DIAQ).

Belongs to the methyltransferase superfamily. Fibrillarin family. As to quaternary structure, interacts with nop5. Component of box C/D small ribonucleoprotein (sRNP) particles that contain rpl7ae, FlpA and nop5, plus a guide RNA. These sRNP particles form homodimers, giving rise to an asymmetric holoenzyme.

Involved in pre-rRNA and tRNA processing. Utilizes the methyl donor S-adenosyl-L-methionine to catalyze the site-specific 2'-hydroxyl methylation of ribose moieties in rRNA and tRNA. Site specificity is provided by a guide RNA that base pairs with the substrate. Methylation occurs at a characteristic distance from the sequence involved in base pairing with the guide RNA. This chain is Fibrillarin-like rRNA/tRNA 2'-O-methyltransferase, found in Saccharolobus solfataricus (strain ATCC 35092 / DSM 1617 / JCM 11322 / P2) (Sulfolobus solfataricus).